Reading from the N-terminus, the 457-residue chain is Transcription factor E2F3 (457 aa).

Positions L80 to Y171 are disordered. Over residues S93–S102 the composition is skewed to polar residues. Residues T96–P145 form a cyclin A/CDK2 binding region. A DNA-binding region spans residues G147–S237. Over residues S155–S164 the composition is skewed to low complexity. The interval L196–L217 is leucine-zipper. The DEF box motif lies at E201–S237. Residues L238 to I329 are dimerization. The interval H350–A387 is disordered. Residues D371–A387 show a composition bias toward polar residues. A transactivation region spans residues S383 to S457. The tract at residues E424–D441 is retinoblastoma protein binding.

It belongs to the E2F/DP family. As to quaternary structure, component of the DRTF1/E2F transcription factor complex. Binds cooperatively with TFDP1/Dp-1 to E2F sites. Interacts with retinoblastoma protein RB1 and related proteins (such as RBL1) that inhibit the E2F transactivation domain. Binds EAPP.

The protein resides in the nucleus. Transcription activator that binds DNA cooperatively with DP proteins through the E2 recognition site, 5'-TTTC[CG]CGC-3' found in the promoter region of a number of genes whose products are involved in cell cycle regulation or in DNA replication. The DRTF1/E2F complex functions in the control of cell-cycle progression from G1 to S phase. E2F3 binds specifically to RB1 in a cell-cycle dependent manner. Inhibits adipogenesis, probably through the repression of CEBPA binding to its target gene promoters. In Mus musculus (Mouse), this protein is Transcription factor E2F3 (E2f3).